Reading from the N-terminus, the 406-residue chain is Argininosuccinate synthase (406 aa).

An ATP-binding site is contributed by 9-17 (AYSGGLDTS). Tyr86 is a binding site for L-citrulline. Gly116 is an ATP binding site. L-aspartate contacts are provided by Thr118, Asn122, and Asp123. Asn122 is a binding site for L-citrulline. L-citrulline is bound by residues Arg126, Ser174, Ser183, Glu259, and Tyr271.

This sequence belongs to the argininosuccinate synthase family. Type 1 subfamily. As to quaternary structure, homotetramer.

Its subcellular location is the cytoplasm. The catalysed reaction is L-citrulline + L-aspartate + ATP = 2-(N(omega)-L-arginino)succinate + AMP + diphosphate + H(+). The protein operates within amino-acid biosynthesis; L-arginine biosynthesis; L-arginine from L-ornithine and carbamoyl phosphate: step 2/3. The chain is Argininosuccinate synthase from Geobacillus kaustophilus (strain HTA426).